We begin with the raw amino-acid sequence, 232 residues long: 2,3,4,5-tetrahydropyridine-2,6-dicarboxylate N-acetyltransferase (232 aa).

It belongs to the transferase hexapeptide repeat family. DapH subfamily.

It carries out the reaction (S)-2,3,4,5-tetrahydrodipicolinate + acetyl-CoA + H2O = L-2-acetamido-6-oxoheptanedioate + CoA. It participates in amino-acid biosynthesis; L-lysine biosynthesis via DAP pathway; LL-2,6-diaminopimelate from (S)-tetrahydrodipicolinate (acetylase route): step 1/3. In terms of biological role, catalyzes the transfer of an acetyl group from acetyl-CoA to tetrahydrodipicolinate. The sequence is that of 2,3,4,5-tetrahydropyridine-2,6-dicarboxylate N-acetyltransferase from Streptococcus pneumoniae serotype 2 (strain D39 / NCTC 7466).